A 313-amino-acid polypeptide reads, in one-letter code: MEGTWIEVRVITKSEALEPISGIFYGLDCKGVAIEDPNDILGREQGPLTWDFADINILEHKGKVAVVKGYFSEEDNIDDVIAYVKERVEELKESGLDVGEGTVEAEKMFEEDWANNWKKYYKPIKIGEKIVIKPIWEEYEPTGEEMVVELDPGMAFGTGDHETTRMCVQALDKYVKADTTVFDIGTGSGILALVASKLGAKHVVGVDLDPVAVDSAKENISFNNVDNIEVLYGNLLDVVDGKADIVVANIIAEIICILVDDVKKALNKDGIFITSGIIHERRQMVIDKLEQEGFEVMEVNKDGEWNCIVAKLK.

T164, G185, D207, and N249 together coordinate S-adenosyl-L-methionine.

This sequence belongs to the methyltransferase superfamily. PrmA family.

It localises to the cytoplasm. The catalysed reaction is L-lysyl-[protein] + 3 S-adenosyl-L-methionine = N(6),N(6),N(6)-trimethyl-L-lysyl-[protein] + 3 S-adenosyl-L-homocysteine + 3 H(+). Functionally, methylates ribosomal protein L11. This chain is Ribosomal protein L11 methyltransferase, found in Clostridium perfringens (strain 13 / Type A).